Here is a 222-residue protein sequence, read N- to C-terminus: Riboflavin kinase (222 aa).

The unknown stretch occupies residues 1 to 92 (MVEAEDLQSL…VRIFNPDQRG (92 aa)). The riboflavin kinase stretch occupies residues 93–222 (YTLTGTVISG…DTIEVEITHD (130 aa)). 102-107 (GLGEGR) is a CDP binding site. 2 residues coordinate Mg(2+): T131 and N133. The FMN site is built by T188 and E196. A CDP-binding site is contributed by 201–204 (CELR).

It belongs to the archaeal riboflavin kinase family. Mg(2+) is required as a cofactor.

The enzyme catalyses riboflavin + CTP = CDP + FMN + H(+). It functions in the pathway cofactor biosynthesis; FMN biosynthesis; FMN from riboflavin (CTP route): step 1/1. Catalyzes the CTP-dependent phosphorylation of riboflavin (vitamin B2) to form flavin mononucleotide (FMN). The chain is Riboflavin kinase (ribK) from Methanoculleus marisnigri (strain ATCC 35101 / DSM 1498 / JR1).